Consider the following 242-residue polypeptide: Biosynthetic peptidoglycan transglycosylase (242 aa).

The chain crosses the membrane as a helical span at residues 19–39 (ILAALAVFWGGGIALFSVVPV).

This sequence belongs to the glycosyltransferase 51 family.

It localises to the cell inner membrane. The catalysed reaction is [GlcNAc-(1-&gt;4)-Mur2Ac(oyl-L-Ala-gamma-D-Glu-L-Lys-D-Ala-D-Ala)](n)-di-trans,octa-cis-undecaprenyl diphosphate + beta-D-GlcNAc-(1-&gt;4)-Mur2Ac(oyl-L-Ala-gamma-D-Glu-L-Lys-D-Ala-D-Ala)-di-trans,octa-cis-undecaprenyl diphosphate = [GlcNAc-(1-&gt;4)-Mur2Ac(oyl-L-Ala-gamma-D-Glu-L-Lys-D-Ala-D-Ala)](n+1)-di-trans,octa-cis-undecaprenyl diphosphate + di-trans,octa-cis-undecaprenyl diphosphate + H(+). The protein operates within cell wall biogenesis; peptidoglycan biosynthesis. Peptidoglycan polymerase that catalyzes glycan chain elongation from lipid-linked precursors. This chain is Biosynthetic peptidoglycan transglycosylase, found in Salmonella schwarzengrund (strain CVM19633).